Here is a 224-residue protein sequence, read N- to C-terminus: Holliday junction branch migration complex subunit RuvA (224 aa).

The domain I stretch occupies residues 1 to 67 (MISWLKGEKV…EDGTSLYGFI (67 aa)). The tract at residues 68–146 (EVNQRDLFRE…RFTDNDKTIH (79 aa)) is domain II. Residues 147 to 155 (ENKKGIEAN) form a flexible linker region. A domain III region spans residues 156 to 224 (QFSKYIDEIY…ILMKLSEKTT (69 aa)).

Belongs to the RuvA family. In terms of assembly, homotetramer. Forms an RuvA(8)-RuvB(12)-Holliday junction (HJ) complex. HJ DNA is sandwiched between 2 RuvA tetramers; dsDNA enters through RuvA and exits via RuvB. An RuvB hexamer assembles on each DNA strand where it exits the tetramer. Each RuvB hexamer is contacted by two RuvA subunits (via domain III) on 2 adjacent RuvB subunits; this complex drives branch migration. In the full resolvosome a probable DNA-RuvA(4)-RuvB(12)-RuvC(2) complex forms which resolves the HJ.

It localises to the cytoplasm. Its function is as follows. The RuvA-RuvB-RuvC complex processes Holliday junction (HJ) DNA during genetic recombination and DNA repair, while the RuvA-RuvB complex plays an important role in the rescue of blocked DNA replication forks via replication fork reversal (RFR). RuvA specifically binds to HJ cruciform DNA, conferring on it an open structure. The RuvB hexamer acts as an ATP-dependent pump, pulling dsDNA into and through the RuvAB complex. HJ branch migration allows RuvC to scan DNA until it finds its consensus sequence, where it cleaves and resolves the cruciform DNA. The polypeptide is Holliday junction branch migration complex subunit RuvA (Prochlorococcus marinus (strain NATL1A)).